The primary structure comprises 912 residues: Metabotropic glutamate receptor 4 (912 aa).

A signal peptide spans 1-32 (MSGKGGWAWWWARLPLCLLLSLYAPWVPSSLG). Residues 33–587 (KPKGHPHMNS…IVKLEWDSPW (555 aa)) lie on the Extracellular side of the membrane. A disulfide bridge connects residues Cys-67 and Cys-109. An N-linked (GlcNAc...) asparagine glycan is attached at Asn-98. L-glutamate-binding positions include Ser-159, 180-182 (AST), and Tyr-230. Cystine bridges form between Cys-249–Cys-538, Cys-372–Cys-388, Cys-428–Cys-435, Cys-520–Cys-539, Cys-524–Cys-542, Cys-545–Cys-557, and Cys-560–Cys-573. A glycan (N-linked (GlcNAc...) asparagine) is linked at Asn-301. Asp-312 serves as a coordination point for L-glutamate. Position 405 (Lys-405) interacts with L-glutamate. Residues Asn-454 and Asn-484 are each glycosylated (N-linked (GlcNAc...) asparagine). The N-linked (GlcNAc...) asparagine glycan is linked to Asn-569. A helical transmembrane segment spans residues 588 to 610 (AVLPLFLAVVGIAATLFVVVTFV). The Cytoplasmic segment spans residues 611-624 (RYNDTPIVKASGRE). A helical membrane pass occupies residues 625 to 645 (LSYVLLAGIFLCYATTFLMIA). Residues 646-656 (EPDLGTCSLRR) lie on the Extracellular side of the membrane. The chain crosses the membrane as a helical span at residues 657–675 (IFLGLGMSISYAALLTKTN). At 676–699 (RIYRIFEQGKRSVSAPRFISPASQ) the chain is on the cytoplasmic side. Residues 700 to 720 (LAITFILISLQLLGICVWFVV) traverse the membrane as a helical segment. Over 721 to 750 (DPSHSVVDFQDQRTLDPRFARGVLKCDISD) the chain is Extracellular. The helical transmembrane segment at 751–772 (LSLICLLGYSMLLMVTCTVYAI) threads the bilayer. Over 773-785 (KTRGVPETFNEAK) the chain is Cytoplasmic. The helical transmembrane segment at 786-808 (PIGFTMYTTCIVWLAFIPIFFGT) threads the bilayer. The Extracellular portion of the chain corresponds to 809–821 (SQSADKLYIQTTT). A helical transmembrane segment spans residues 822-847 (LTVSVSLSASVSLGMLYMPKVYIILF). Residues 848 to 912 (HPEQNVPKRK…TYVTYTNHAI (65 aa)) are Cytoplasmic-facing.

The protein belongs to the G-protein coupled receptor 3 family. As to quaternary structure, interacts with PICK1. As to expression, is widely distributed in the CNS. Predominant expression is seen in the granule cells of the cerebellum.

It localises to the cell membrane. Functionally, G-protein coupled receptor for glutamate. Ligand binding causes a conformation change that triggers signaling via guanine nucleotide-binding proteins (G proteins) and modulates the activity of down-stream effectors. Signaling inhibits adenylate cyclase activity. The sequence is that of Metabotropic glutamate receptor 4 (Grm4) from Rattus norvegicus (Rat).